We begin with the raw amino-acid sequence, 154 residues long: Protein X (154 aa).

The interval 68–117 (PCALRFTSARRMETTVNAPGNLPKVLHKRTLGLSVMSTTDLEAYFKDCVF) is mitochondrial targeting sequence.

The protein belongs to the orthohepadnavirus protein X family. In terms of assembly, may form homodimer. May interact with host CEBPA, CFLAR, CREB1, DDB1, E4F1, HBXIP, HSPD1/HSP60, NFKBIA, POLR2E and SMAD4. Interacts with host SMC5-SMC6 complex and induces its degradation. Interacts with host TRPC4AP; leading to prevent ubiquitination of TRPC4AP. Interacts with host PLSCR1; this interaction promotes ubiquitination and degradation of HBx and impairs HBx-mediated cell proliferation. In terms of processing, a fraction may be phosphorylated in insect cells and HepG2 cells, a human hepatoblastoma cell line. Phosphorylated in vitro by host protein kinase C or mitogen-activated protein kinase. N-acetylated in insect cells.

It is found in the host cytoplasm. The protein resides in the host nucleus. Its subcellular location is the host mitochondrion. In terms of biological role, multifunctional protein that plays a role in silencing host antiviral defenses and promoting viral transcription. Does not seem to be essential for HBV infection. May be directly involved in development of cirrhosis and liver cancer (hepatocellular carcinoma). Most of cytosolic activities involve modulation of cytosolic calcium. The effect on apoptosis is controversial depending on the cell types in which the studies have been conducted. May induce apoptosis by localizing in mitochondria and causing loss of mitochondrial membrane potential. May also modulate apoptosis by binding host CFLAR, a key regulator of the death-inducing signaling complex (DISC). Promotes viral transcription by using the host E3 ubiquitin ligase DDB1 to target the SMC5-SMC6 complex to proteasomal degradation. This host complex would otherwise bind to viral episomal DNA, and prevents its transcription. Moderately stimulates transcription of many different viral and cellular transcription elements. Promoters and enhancers stimulated by HBx contain DNA binding sites for NF-kappa-B, AP-1, AP-2, c-EBP, ATF/CREB, or the calcium-activated factor NF-AT. The sequence is that of Protein X from Hepatitis B virus genotype B2 (isolate Vietnam/16091/1992) (HBV-B).